The primary structure comprises 464 residues: Soluble pyridine nucleotide transhydrogenase (464 aa).

Residue 35–44 (DSRRQVGGNC) coordinates FAD.

It belongs to the class-I pyridine nucleotide-disulfide oxidoreductase family. Requires FAD as cofactor.

The protein resides in the cytoplasm. The catalysed reaction is NAD(+) + NADPH = NADH + NADP(+). Functionally, conversion of NADPH, generated by peripheral catabolic pathways, to NADH, which can enter the respiratory chain for energy generation. This is Soluble pyridine nucleotide transhydrogenase from Pseudomonas putida (strain W619).